The primary structure comprises 375 residues: Protein arginine N-methyltransferase 6 (375 aa).

Residues 1–38 (MSQPKKRKLESGGGGEGGEGTEEEDGAEREAALERPRR) are disordered. T21 carries the phosphothreonine modification. Residues 28–38 (EREAALERPRR) show a composition bias toward basic and acidic residues. An asymmetric dimethylarginine; by autocatalysis mark is found at R29, R35, and R37. Positions 44 to 374 (DQLYYECYSD…EEKTKDFAME (331 aa)) constitute an SAM-dependent MTase PRMT-type domain. Residues H57, R66, G90, E112, and E141 each contribute to the S-adenosyl-L-methionine site. Residues E155 and E164 contribute to the active site.

The protein belongs to the class I-like SAM-binding methyltransferase superfamily. Protein arginine N-methyltransferase family. PRMT6 subfamily. Interacts with EPB41L3 and NCOA1. In terms of assembly, (Microbial infection) Interacts with (and methylates) HIV-1 Tat, Rev and Nucleocapsid protein p7 (NC). As to quaternary structure, (Microbial infection) Interacts with human cytomegalovirus protein UL69. Automethylation enhances its stability and antiretroviral activity. In terms of tissue distribution, highly expressed in kidney and testis.

Its subcellular location is the nucleus. It carries out the reaction L-arginyl-[protein] + 2 S-adenosyl-L-methionine = N(omega),N(omega)-dimethyl-L-arginyl-[protein] + 2 S-adenosyl-L-homocysteine + 2 H(+). Functionally, arginine methyltransferase that can catalyze the formation of both omega-N monomethylarginine (MMA) and asymmetrical dimethylarginine (aDMA), with a strong preference for the formation of aDMA. Preferentially methylates arginyl residues present in a glycine and arginine-rich domain and displays preference for monomethylated substrates. Specifically mediates the asymmetric dimethylation of histone H3 'Arg-2' to form H3R2me2a. H3R2me2a represents a specific tag for epigenetic transcriptional repression and is mutually exclusive with methylation on histone H3 'Lys-4' (H3K4me2 and H3K4me3). Acts as a transcriptional repressor of various genes such as HOXA2, THBS1 and TP53. Repression of TP53 blocks cellular senescence. Also methylates histone H2A and H4 'Arg-3' (H2AR3me and H4R3me, respectively). Acts as a regulator of DNA base excision during DNA repair by mediating the methylation of DNA polymerase beta (POLB), leading to the stimulation of its polymerase activity by enhancing DNA binding and processivity. Methylates HMGA1. Regulates alternative splicing events. Acts as a transcriptional coactivator of a number of steroid hormone receptors including ESR1, ESR2, PGR and NR3C1. Promotes fasting-induced transcriptional activation of the gluconeogenic program through methylation of the CRTC2 transcription coactivator. May play a role in innate immunity against HIV-1 in case of infection by methylating and impairing the function of various HIV-1 proteins such as Tat, Rev and Nucleocapsid protein p7 (NC). Methylates GPS2, protecting GPS2 from ubiquitination and degradation. Methylates SIRT7, inhibiting SIRT7 histone deacetylase activity and promoting mitochondria biogenesis. The sequence is that of Protein arginine N-methyltransferase 6 (PRMT6) from Homo sapiens (Human).